The sequence spans 126 residues: MDKTLKFTESHEWVRDNGDGTVTIGISEHAQEMLGDVVFVELPELEAEIEAGESFSLVESVKAASDIYAPVTGEVVEVNEELSDSPELINEEPYEGGWIVKVKLSDPSELDNLKDAEEYLNSIEED.

The region spanning 21–103 (TVTIGISEHA…YEGGWIVKVK (83 aa)) is the Lipoyl-binding domain. Lys62 carries the N6-lipoyllysine modification.

The protein belongs to the GcvH family. As to quaternary structure, the glycine cleavage system is composed of four proteins: P, T, L and H. It depends on (R)-lipoate as a cofactor.

Its function is as follows. The glycine cleavage system catalyzes the degradation of glycine. The H protein shuttles the methylamine group of glycine from the P protein to the T protein. The chain is Glycine cleavage system H protein from Vibrio vulnificus (strain CMCP6).